A 268-amino-acid chain; its full sequence is Interleukin-1 alpha (268 aa).

The propeptide occupies 1 to 112; it reads MAKVPDLFED…NTEEEIIKPR (112 aa). Lys-82 is modified (N6-acetyllysine). Residues 82 to 86 are nuclear localization signal (NLS); that stretch reads KKRRL. Ser-87 carries the phosphoserine modification. N-linked (GlcNAc...) asparagine glycans are attached at residues Asn-102 and Asn-141.

It belongs to the IL-1 family. Monomer. Interacts with TMED10; the interaction mediates the translocation from the cytoplasm into the ERGIC (endoplasmic reticulum-Golgi intermediate compartment) and thereby secretion. Interacts with IL1R1. Interacts with S100A13; this interaction is the first step in the export of IL1A, followed by direct translocation of this complex across the plasma membrane. In terms of processing, acetylated within its nuclear localization sequence, which impacts subcellular localization. Post-translationally, proteolytic processed by CAPN1 in a calcium-dependent manner. Cleavage from 31 kDa precursor to 18 kDa biologically active molecules. Phosphorylated. Phosphorylation greatly enhances susceptibility to digestion and promotes the conversion of pre-IL1A alpha to the biologically active IL1A.

The protein resides in the nucleus. Its subcellular location is the cytoplasm. It is found in the secreted. Cytokine constitutively present intracellularly in nearly all resting non-hematopoietic cells that plays an important role in inflammation and bridges the innate and adaptive immune systems. After binding to its receptor IL1R1 together with its accessory protein IL1RAP, forms the high affinity interleukin-1 receptor complex. Signaling involves the recruitment of adapter molecules such as MYD88, IRAK1 or IRAK4. In turn, mediates the activation of NF-kappa-B and the three MAPK pathways p38, p42/p44 and JNK pathways. Within the cell, acts as an alarmin and cell death results in its liberation in the extracellular space after disruption of the cell membrane to induce inflammation and alert the host to injury or damage. In addition to its role as a danger signal, which occurs when the cytokine is passively released by cell necrosis, directly senses DNA damage and acts as signal for genotoxic stress without loss of cell integrity. This chain is Interleukin-1 alpha (IL1A), found in Bos taurus (Bovine).